Consider the following 1490-residue polypeptide: MTTKRKLIGRLVPCRCFRGEEEIISVLDYSHCSLQQVPKEVFNFERTLEELYLDANQIEELPKQLFNCQALRKLSIPDNDLSSLPTSIASLVNLKELDISKNGVQEFPENIKCCKCLTIIEASVNPISKLPDGFTQLLNLTQLYLNDAFLEFLPANFGRLVKLRILELRENHLKTLPKSMHKLAQLERLDLGNNEFSELPEVLDQIQNLRELWMDNNALQVLPGSIGKLKMLVYLDMSKNRIETVDMDISGCEALEDLLLSSNMLQQLPDSIGLLKKLTTLKVDDNQLTMLPNTIGNLSLLEEFDCSCNELESLPPTIGYLHSLRTLAVDENFLPELPREIGSCKNVTVMSLRSNKLEFLPEEIGQMQRLRVLNLSDNRLKNLPFSFTKLKELAALWLSDNQSKALIPLQTEAHPETKQRVLTNYMFPQQPRGDEDFQSDSDSFNPTLWEEQRQQRMTVAFEFEDKKEDDESAGKVKALSCQAPWDRGQRGITLQPARLSGDCCTPWARCDQQIQDMPVPQSDPQLAWGCISGLQQERSMCAPLPVAAQSTTLPSLSGRQVEINLKRYPTPYPEDLKNMVKSVQNLVGKPSHGVRVENANPTANTEQTVKEKFEHKWPVAPKEITVEDSFVHPANEMRIGELHPSLAETPLYPPKLVLLGKDKKESTDESEVDKTHCLNNSVSSGTYSDYSPSQASSASSNTRVKVGSLQPTTKDAVHNSLWGNRIAPPFPQPLDAKPLLTQREAVPPGNLPQRPDRLPMSDAFPDNWTDGSHYDNTGFVSEEATGENANNNPLLSSKARSVPAHGRRPLIRQERIVGVPLELEQSTHRHTPETEVPPSNPWQNWTRTPSPFEDRTAFPSKLETTPTTSPLPERKDHMKEPTETPGPFSPGVPWEYHDPTPNRSLGNVFSQIHCRPDSSKGVIAISKSTERLSPLMKDIKSNKFKKSQSIDEIDVGTYKVYNIPLENYASGSDHLGSHERPDKFLGPEHGMSSMSRSQSVPMLDDEMLMYGSSKGPPQQKASMTKKVYQFDQSFNPQGAVEVKAEKRIPPPFAHNSEYVQQPGKNIAKDLVSPRAYRGYPPMEQMFSFSQPSVNEDAMVNAQFASQGPRAGFLRRADSLASSTEMAMFRRVSEPHELPPGDRYGRAAYRGGLEGQSSVSMTDPQFLKRNGRYEDEHPSYQEVKAQAGSFPAKNLTQRRPLSARSYSTESYGASQTRPVSARPTMAALLEKIPSDYNLGNYGDKTSDNSDIKTRPTPVKGEESCGKMPADWRQQLLRHIEARRLDRTPSQQSNILDNGQEDVSPSGQWNPYPLGRRDVPPDTITKKAGSHIQTLMGSQSLQHRSREQQPYEGNINKVTIQQFQSPLPIQIPSSQATRGPQPGRCLIQTKGQRSMDGYPEQFCVRIEKNPGLGFSISGGISGQGNPFKPSDKGIFVTRVQPDGPASNLLQPGDKILQANGHSFVHMEHEKAVLLLKSFQNTVDLVIQRELTV.

17 LRR repeats span residues I23–F44, T47–C68, A70–L91, N93–C114, C116–L137, N139–V161, K162–L183, Q185–I206, N208–L229, M231–E253, A254–L275, K277–L298, L300–L321, S323–C344, N346–M367, R369–K391, and E392–A413. Phosphoserine is present on residues S439, S441, and S443. Residues K663–H676 are compositionally biased toward basic and acidic residues. Disordered stretches follow at residues K663 to L709, D775 to R808, and E822 to P899. Over residues C677–T686 the composition is skewed to polar residues. A compositionally biased stretch (low complexity) spans Y687 to S700. Polar residues predominate over residues E787–A799. Residue T831 is modified to Phosphothreonine. S850 carries the phosphoserine modification. Over residues P859–L871 the composition is skewed to low complexity. The residue at position 865 (T865) is a Phosphothreonine. S869 bears the Phosphoserine mark. Over residues P872–T882 the composition is skewed to basic and acidic residues. S947, S949, and S1118 each carry phosphoserine. An Omega-N-methylarginine modification is found at R1149. Over residues L1194–P1217 the composition is skewed to polar residues. The tract at residues L1194–V1218 is disordered. S1233 bears the Phosphoserine mark. Disordered stretches follow at residues G1238–K1265 and R1282–L1312. Positions K1243 to C1263 are enriched in basic and acidic residues. Residues T1286–W1307 show a composition bias toward polar residues. 2 positions are modified to phosphoserine: S1288 and S1392. The PDZ domain maps to E1398–L1488.

This sequence belongs to the LAP (LRR and PDZ) protein family. In terms of assembly, interacts with CNKSR2 and DLG4. Interacts with CTNND2/Catenin delta-2. Forms a complex with N-cadherin through CTNND2. Interacts with CAMK2A. O-glycosylated and phosphorylated. As to expression, brain-specific. Highly concentrated at synapses.

It localises to the cytoplasm. The protein localises to the postsynaptic density. Its function is as follows. Required for normal synaptic spine architecture and function. Necessary for DISC1 and GRM5 localization to postsynaptic density complexes and for both N-methyl D-aspartate receptor-dependent and metabotropic glutamate receptor-dependent long term depression. The protein is Leucine-rich repeat-containing protein 7 (Lrrc7) of Rattus norvegicus (Rat).